The chain runs to 521 residues: uncharacterized protein (521 aa).

10 helical membrane-spanning segments follow: residues 103–123 (NLMLQVLAPCFVLLWCAVPMP), 136–156 (FWFFLIFYYGIYNAVGLLWIT), 177–197 (YILFWMFSLLVGSLVVYFTAW), 200–220 (ITFTWITLMFISMIIPIGISF), 259–279 (AYAHYSWFIVVLLVTLLVYIV), 299–319 (IMYVYSWTGTVSLCNLVSSWI), 327–346 (YALVTVFKLYFELTLQVYVR), 358–378 (FVLVQIASSLTMMSVIPLITM), 411–431 (CVASNVSMLSFLGWSLILHFG), and 450–470 (FKLTFYASTAVWISEMVASYL).

It is found in the membrane. This is an uncharacterized protein from Schizosaccharomyces pombe (strain 972 / ATCC 24843) (Fission yeast).